The chain runs to 158 residues: NAD(P)H-quinone oxidoreductase subunit J, chloroplastic (158 aa).

It belongs to the complex I 30 kDa subunit family. As to quaternary structure, NDH is composed of at least 16 different subunits, 5 of which are encoded in the nucleus.

The protein resides in the plastid. It localises to the chloroplast thylakoid membrane. It catalyses the reaction a plastoquinone + NADH + (n+1) H(+)(in) = a plastoquinol + NAD(+) + n H(+)(out). The enzyme catalyses a plastoquinone + NADPH + (n+1) H(+)(in) = a plastoquinol + NADP(+) + n H(+)(out). Its function is as follows. NDH shuttles electrons from NAD(P)H:plastoquinone, via FMN and iron-sulfur (Fe-S) centers, to quinones in the photosynthetic chain and possibly in a chloroplast respiratory chain. The immediate electron acceptor for the enzyme in this species is believed to be plastoquinone. Couples the redox reaction to proton translocation, and thus conserves the redox energy in a proton gradient. In Ranunculus macranthus (Large buttercup), this protein is NAD(P)H-quinone oxidoreductase subunit J, chloroplastic.